Reading from the N-terminus, the 288-residue chain is Glutamate racemase (288 aa).

Substrate-binding positions include 10–11 (DS) and 42–43 (YG). Catalysis depends on Cys-73, which acts as the Proton donor/acceptor. Substrate is bound at residue 74-75 (NT). Residue Cys-184 is the Proton donor/acceptor of the active site. 185 to 186 (TH) is a substrate binding site.

This sequence belongs to the aspartate/glutamate racemases family.

The enzyme catalyses L-glutamate = D-glutamate. Its pathway is cell wall biogenesis; peptidoglycan biosynthesis. Functionally, provides the (R)-glutamate required for cell wall biosynthesis. The polypeptide is Glutamate racemase (Corynebacterium kroppenstedtii (strain DSM 44385 / JCM 11950 / CIP 105744 / CCUG 35717)).